The sequence spans 283 residues: Protease HtpX homolog (283 aa).

The next 2 membrane-spanning stretches (helical) occupy residues 7–27 (TAVL…VLGG) and 29–49 (QGMA…YWFS). His-131 lines the Zn(2+) pocket. Glu-132 is an active-site residue. Residue His-135 participates in Zn(2+) binding. 2 helical membrane-spanning segments follow: residues 146–166 (ISAT…FFGG) and 177–197 (IAGI…QMAI). Glu-202 contacts Zn(2+).

The protein belongs to the peptidase M48B family. Zn(2+) is required as a cofactor.

Its subcellular location is the cell inner membrane. The polypeptide is Protease HtpX homolog (Methylibium petroleiphilum (strain ATCC BAA-1232 / LMG 22953 / PM1)).